A 521-amino-acid polypeptide reads, in one-letter code: Probable protein kinase UbiB (521 aa).

The Protein kinase domain maps to S119–A497. ATP is bound by residues V125–V133 and K151. The active-site Proton acceptor is D286. A helical membrane pass occupies residues Q496–V516.

It belongs to the ABC1 family. UbiB subfamily.

The protein resides in the cell inner membrane. The protein operates within cofactor biosynthesis; ubiquinone biosynthesis [regulation]. Is probably a protein kinase regulator of UbiI activity which is involved in aerobic coenzyme Q (ubiquinone) biosynthesis. The polypeptide is Probable protein kinase UbiB (Delftia acidovorans (strain DSM 14801 / SPH-1)).